The primary structure comprises 264 residues: Thymidylate synthase (264 aa).

A dUMP-binding site is contributed by Arg21. His51 is a binding site for (6R)-5,10-methylene-5,6,7,8-tetrahydrofolate. 126 to 127 (RR) contacts dUMP. The Nucleophile role is filled by Cys146. Residues 166–169 (RSCD), Asn177, and 207–209 (HLY) each bind dUMP. Asp169 provides a ligand contact to (6R)-5,10-methylene-5,6,7,8-tetrahydrofolate. Residue Ala263 coordinates (6R)-5,10-methylene-5,6,7,8-tetrahydrofolate.

It belongs to the thymidylate synthase family. Bacterial-type ThyA subfamily. As to quaternary structure, homodimer.

It localises to the cytoplasm. The enzyme catalyses dUMP + (6R)-5,10-methylene-5,6,7,8-tetrahydrofolate = 7,8-dihydrofolate + dTMP. Its pathway is pyrimidine metabolism; dTTP biosynthesis. Functionally, catalyzes the reductive methylation of 2'-deoxyuridine-5'-monophosphate (dUMP) to 2'-deoxythymidine-5'-monophosphate (dTMP) while utilizing 5,10-methylenetetrahydrofolate (mTHF) as the methyl donor and reductant in the reaction, yielding dihydrofolate (DHF) as a by-product. This enzymatic reaction provides an intracellular de novo source of dTMP, an essential precursor for DNA biosynthesis. The protein is Thymidylate synthase of Yersinia pestis bv. Antiqua (strain Antiqua).